The sequence spans 102 residues: DNA/RNA-binding protein Alba 2 (102 aa).

The DNA site is built by arginine 10, arginine 13, arginine 40, arginine 42, asparagine 43, arginine 46, and arginine 86.

This sequence belongs to the histone-like Alba family. In terms of assembly, forms homodimers and homotetramers; oligomerization is enhanced and stabilized by DNA. Interacts with Alba 1.

It is found in the cytoplasm. The protein resides in the chromosome. Binds double-stranded DNA tightly but without sequence specificity. Involved in DNA compaction. The protein is DNA/RNA-binding protein Alba 2 of Aeropyrum pernix (strain ATCC 700893 / DSM 11879 / JCM 9820 / NBRC 100138 / K1).